We begin with the raw amino-acid sequence, 223 residues long: DNA mismatch repair protein MutH (223 aa).

Belongs to the MutH family.

The protein localises to the cytoplasm. Functionally, sequence-specific endonuclease that cleaves unmethylated GATC sequences. It is involved in DNA mismatch repair. The polypeptide is DNA mismatch repair protein MutH (Shewanella baltica (strain OS195)).